The following is a 213-amino-acid chain: Protein big brother (213 aa).

It belongs to the CBF-beta family.

Its subcellular location is the nucleus. Its function is as follows. Regulates the DNA-binding properties of Runt. The protein is Protein big brother (Bgb) of Drosophila melanogaster (Fruit fly).